The sequence spans 195 residues: Imidazoleglycerol-phosphate dehydratase (195 aa).

Belongs to the imidazoleglycerol-phosphate dehydratase family.

It localises to the cytoplasm. It carries out the reaction D-erythro-1-(imidazol-4-yl)glycerol 3-phosphate = 3-(imidazol-4-yl)-2-oxopropyl phosphate + H2O. It functions in the pathway amino-acid biosynthesis; L-histidine biosynthesis; L-histidine from 5-phospho-alpha-D-ribose 1-diphosphate: step 6/9. The sequence is that of Imidazoleglycerol-phosphate dehydratase from Methylorubrum populi (strain ATCC BAA-705 / NCIMB 13946 / BJ001) (Methylobacterium populi).